The primary structure comprises 372 residues: Queuine tRNA-ribosyltransferase (372 aa).

Catalysis depends on Asp-92, which acts as the Proton acceptor. Residues 92–96 (DSGGY), Asp-146, Gln-188, and Gly-215 each bind substrate. The tract at residues 246–252 (GIGSLRE) is RNA binding. Residue Asp-265 is the Nucleophile of the active site. Residues 270-274 (TRLGR) form an RNA binding; important for wobble base 34 recognition region. Zn(2+)-binding residues include Cys-303, Cys-305, Cys-308, and His-334.

It belongs to the queuine tRNA-ribosyltransferase family. Homodimer. Within each dimer, one monomer is responsible for RNA recognition and catalysis, while the other monomer binds to the replacement base PreQ1. It depends on Zn(2+) as a cofactor.

It catalyses the reaction 7-aminomethyl-7-carbaguanine + guanosine(34) in tRNA = 7-aminomethyl-7-carbaguanosine(34) in tRNA + guanine. It participates in tRNA modification; tRNA-queuosine biosynthesis. In terms of biological role, catalyzes the base-exchange of a guanine (G) residue with the queuine precursor 7-aminomethyl-7-deazaguanine (PreQ1) at position 34 (anticodon wobble position) in tRNAs with GU(N) anticodons (tRNA-Asp, -Asn, -His and -Tyr). Catalysis occurs through a double-displacement mechanism. The nucleophile active site attacks the C1' of nucleotide 34 to detach the guanine base from the RNA, forming a covalent enzyme-RNA intermediate. The proton acceptor active site deprotonates the incoming PreQ1, allowing a nucleophilic attack on the C1' of the ribose to form the product. After dissociation, two additional enzymatic reactions on the tRNA convert PreQ1 to queuine (Q), resulting in the hypermodified nucleoside queuosine (7-(((4,5-cis-dihydroxy-2-cyclopenten-1-yl)amino)methyl)-7-deazaguanosine). This is Queuine tRNA-ribosyltransferase from Prochlorococcus marinus (strain MIT 9215).